Reading from the N-terminus, the 107-residue chain is UPF0145 protein TT_C0892 (107 aa).

It belongs to the UPF0145 family.

The protein is UPF0145 protein TT_C0892 of Thermus thermophilus (strain ATCC BAA-163 / DSM 7039 / HB27).